A 33-amino-acid polypeptide reads, in one-letter code: VTCFCRRRGCASRERLIGYCRFGNTIYGLCCRR.

3 disulfides stabilise this stretch: cysteine 3–cysteine 31, cysteine 5–cysteine 20, and cysteine 10–cysteine 30.

Belongs to the alpha-defensin family.

It localises to the secreted. In terms of biological role, anti-fungal and bactericidal activity, greater against Gram-positive bacteria. This is Neutrophil defensin 3 from Mesocricetus auratus (Golden hamster).